A 286-amino-acid chain; its full sequence is MPELPEVETVRKGLEKRLKNFYIDNVEVLSERSIASNGGSNVFIFNLKDLVFGRWSRRGKYLIASLCKESDLIEEIPSGTLVVHLRMTGYFEWHQNTKAPCTHTRVRFWNKKGSEIRFIDIRNFGQMWWIPPNKLPSEVINGLKNLGPEPFSKDFNPEYLKYCLKGRKRSIKSSLLDQSILAGVGNIYADESLFEAGITPIKASGDLNGCELKKLCKSLTRILKASIGKGGTTFSDFRDLEGLNGTYGGYAWVYRRNQKPCRKCGTLIEKTKVAGRSTHWCPNCQN.

Pro2 functions as the Schiff-base intermediate with DNA in the catalytic mechanism. The Proton donor role is filled by Glu3. Residue Lys60 is the Proton donor; for beta-elimination activity of the active site. Residues His103, Arg122, and Arg167 each contribute to the DNA site. The FPG-type zinc finger occupies 252–286 (WVYRRNQKPCRKCGTLIEKTKVAGRSTHWCPNCQN). Catalysis depends on Arg276, which acts as the Proton donor; for delta-elimination activity.

The protein belongs to the FPG family. Monomer. Zn(2+) serves as cofactor.

It carries out the reaction Hydrolysis of DNA containing ring-opened 7-methylguanine residues, releasing 2,6-diamino-4-hydroxy-5-(N-methyl)formamidopyrimidine.. The enzyme catalyses 2'-deoxyribonucleotide-(2'-deoxyribose 5'-phosphate)-2'-deoxyribonucleotide-DNA = a 3'-end 2'-deoxyribonucleotide-(2,3-dehydro-2,3-deoxyribose 5'-phosphate)-DNA + a 5'-end 5'-phospho-2'-deoxyribonucleoside-DNA + H(+). Its function is as follows. Involved in base excision repair of DNA damaged by oxidation or by mutagenic agents. Acts as a DNA glycosylase that recognizes and removes damaged bases. Has a preference for oxidized purines, such as 7,8-dihydro-8-oxoguanine (8-oxoG). Has AP (apurinic/apyrimidinic) lyase activity and introduces nicks in the DNA strand. Cleaves the DNA backbone by beta-delta elimination to generate a single-strand break at the site of the removed base with both 3'- and 5'-phosphates. This chain is Formamidopyrimidine-DNA glycosylase, found in Prochlorococcus marinus (strain MIT 9211).